Reading from the N-terminus, the 221-residue chain is Histone H1-like protein HC2 (221 aa).

2 stretches are compositionally biased toward basic residues: residues 1–50 (MLGV…KTVA) and 59–70 (PVAKKATAKKAP). The interval 1-70 (MLGVQKKRST…AKKATAKKAP (70 aa)) is disordered.

The protein belongs to the histone H1/H5 family. HCT subfamily.

Might have a role in establishing the nucleoid structure of elementary bodies. The protein is Histone H1-like protein HC2 (hctB) of Chlamydia trachomatis serovar L2 (strain ATCC VR-902B / DSM 19102 / 434/Bu).